The sequence spans 256 residues: uncharacterized protein (256 aa).

Belongs to the methyltransferase superfamily.

Its subcellular location is the cytoplasm. It is found in the nucleus. In terms of biological role, probable methyltransferase. This is an uncharacterized protein from Schizosaccharomyces pombe (strain 972 / ATCC 24843) (Fission yeast).